Here is a 343-residue protein sequence, read N- to C-terminus: Phosphoribosylformylglycinamidine cyclo-ligase (343 aa).

This sequence belongs to the AIR synthase family.

Its subcellular location is the cytoplasm. The catalysed reaction is 2-formamido-N(1)-(5-O-phospho-beta-D-ribosyl)acetamidine + ATP = 5-amino-1-(5-phospho-beta-D-ribosyl)imidazole + ADP + phosphate + H(+). It participates in purine metabolism; IMP biosynthesis via de novo pathway; 5-amino-1-(5-phospho-D-ribosyl)imidazole from N(2)-formyl-N(1)-(5-phospho-D-ribosyl)glycinamide: step 2/2. The polypeptide is Phosphoribosylformylglycinamidine cyclo-ligase (Thermodesulfovibrio yellowstonii (strain ATCC 51303 / DSM 11347 / YP87)).